Consider the following 304-residue polypeptide: Small glutamine-rich tetratricopeptide repeat-containing protein beta (304 aa).

4 TPR repeats span residues 15–49 (LREQ…SPED), 85–118 (ADQL…DPNN), 120–152 (VYYC…DSKY), and 153–186 (SKAY…DPEN). Lysine 131 carries the N6-acetyllysine modification. Serine 293, serine 295, and serine 297 each carry phosphoserine.

It belongs to the SGT family. In terms of assembly, homooligomerize. As to expression, expressed specifically in brain.

Its function is as follows. Co-chaperone that binds directly to HSC70 and HSP70 and regulates their ATPase activity. The polypeptide is Small glutamine-rich tetratricopeptide repeat-containing protein beta (Sgtb) (Rattus norvegicus (Rat)).